The sequence spans 1989 residues: Zinc finger C3H1 domain-containing protein (1989 aa).

Disordered regions lie at residues 1–133, 148–218, 251–290, and 310–365; these read MATA…RPSF, GRPY…SKNE, SSKE…PEEK, and LPGD…LGED. Alanine 2 carries the N-acetylalanine modification. A phosphoserine mark is found at serine 15, serine 28, and serine 34. Over residues 20 to 32 the composition is skewed to acidic residues; sequence GELEDGEISDDDN. Residues 33–44 show a composition bias toward low complexity; it reads NSQIRSRSSSSS. Residues 62 to 72 show a composition bias toward gly residues; sequence RGGGSGGGGGS. 3 stretches are compositionally biased toward low complexity: residues 114–132, 183–192, and 201–210; these read PPSV…PRPS, GFSSSQSWRE, and KSFGRSPSRK. Position 128 is a phosphoserine (serine 128). The stretch at 219-259 forms a coiled coil; sequence NCVEETFEDLLLKYKQIQLELECINKDEKLALSSKEENVQE. Serine 251 is subject to Phosphoserine. Over residues 251 to 262 the composition is skewed to basic and acidic residues; it reads SSKEENVQEDPK. The span at 266–279 shows a compositional bias: polar residues; the sequence is FEDQTSTDNVSITK. Positions 280–290 are enriched in basic and acidic residues; the sequence is DSSKEVAPEEK. The segment covering 330–340 has biased composition (polar residues); sequence KSDTTDSSQGL. A phosphoserine mark is found at serine 352 and serine 383. Residues 358–389 adopt a coiled-coil conformation; it reads SEKKLGEDEEELSELQLRLLALQSASKKWQQK. 2 disordered regions span residues 385 to 671 and 711 to 770; these read KWQQ…SNLS and LNDS…PEAL. A compositionally biased stretch (basic and acidic residues) spans 392 to 402; sequence QVMKESKEKLT. Residues 430 to 440 are compositionally biased toward basic residues; that stretch reads ALRKQQTKAWK. Residues 432–487 adopt a coiled-coil conformation; that stretch reads RKQQTKAWKKLQQQKEQERQKEEDQRKQAEEEERRKREEEIRKIRDLSNQEEQYNR. Composition is skewed to basic and acidic residues over residues 444–479 and 501–515; these read QQKE…RDLS and KSSD…DKQP. The segment covering 527 to 537 has biased composition (acidic residues); it reads NYEEVAMDTDS. Residues 574-583 show a composition bias toward low complexity; it reads VSSLPPLSQP. A compositionally biased stretch (pro residues) spans 594–616; that stretch reads PLPPLPPLPPLPPEDPEQPPKPP. The span at 647–671 shows a compositional bias: polar residues; that stretch reads TSSNSDPPSPPVLNNSHPVPRSNLS. Phosphoserine occurs at positions 662, 714, 717, and 719. The segment covering 755-770 has biased composition (basic and acidic residues); the sequence is PKSEKENDPLRTPEAL. Threonine 766 is subject to Phosphothreonine. Residues serine 805 and serine 809 each carry the phosphoserine modification. Residues 847-909 adopt a coiled-coil conformation; the sequence is LKNLVQQEAK…QQRVTIKKAL (63 aa). Phosphoserine occurs at positions 948, 949, and 953. Residues 965–989 are a coiled coil; it reads EKRRLQKLEYEYALKIQKLKEARAL. Phosphoserine is present on residues serine 998 and serine 1046. Residues 1185-1206 form a C3H1-type zinc finger; that stretch reads FCRFDLTGTCNDDDCQWQHIQD. A phosphoserine mark is found at serine 1301, serine 1303, and serine 1304. TPR repeat units lie at residues 1361-1400, 1401-1434, 1438-1471, 1478-1511, 1602-1635, 1636-1669, and 1745-1778; these read VQLW…NKDN, PEIW…APDY, WTFL…ETSN, LEAL…ANDG, LPLY…CPIN, CQLL…NPQN, and PYLW…AMRC.

Component of the poly(A) tail exosome targeting (PAXT) complex made of accessory factors, such as PABPN1, ZFC3H1 and MTREX, and which directs a subset of long and polyadenylated poly(A) RNAs for exosomal degradation. Co-localizes with component of the CBC-ARS2 (CBCA) complex. Binds to RNA exosome components. Interacts with NCBP1/CBP80, ZC3H18, MTREX and PABPN1 in a RNase-insensitive manner, and with PABPC4, PABPC1 and ZC3H14 in a RNase-sensitive manner.

The protein localises to the nucleus. In terms of biological role, subunit of the trimeric poly(A) tail exosome targeting (PAXT) complex, a complex that directs a subset of long and polyadenylated poly(A) RNAs for exosomal degradation. The RNA exosome is fundamental for the degradation of RNA in eukaryotic nuclei. Substrate targeting is facilitated by its cofactor MTREX, which links to RNA-binding protein adapters. The sequence is that of Zinc finger C3H1 domain-containing protein (ZFC3H1) from Homo sapiens (Human).